Reading from the N-terminus, the 586-residue chain is Phosphomethylpyrimidine synthase (586 aa).

The disordered stretch occupies residues 1–33 (MKQSVSAEQIELKSSLPGSKKVYVDGPREGMKV). Basic and acidic residues predominate over residues 22-33 (VYVDGPREGMKV). Substrate-binding positions include asparagine 193, methionine 222, tyrosine 251, histidine 287, 307 to 309 (SRG), 348 to 351 (DGLR), and glutamate 387. Histidine 391 lines the Zn(2+) pocket. Residue tyrosine 414 participates in substrate binding. Histidine 455 serves as a coordination point for Zn(2+). [4Fe-4S] cluster is bound by residues cysteine 535, cysteine 538, and cysteine 543.

The protein belongs to the ThiC family. [4Fe-4S] cluster is required as a cofactor.

The enzyme catalyses 5-amino-1-(5-phospho-beta-D-ribosyl)imidazole + S-adenosyl-L-methionine = 4-amino-2-methyl-5-(phosphooxymethyl)pyrimidine + CO + 5'-deoxyadenosine + formate + L-methionine + 3 H(+). Its pathway is cofactor biosynthesis; thiamine diphosphate biosynthesis. Functionally, catalyzes the synthesis of the hydroxymethylpyrimidine phosphate (HMP-P) moiety of thiamine from aminoimidazole ribotide (AIR) in a radical S-adenosyl-L-methionine (SAM)-dependent reaction. The sequence is that of Phosphomethylpyrimidine synthase from Bacillus cereus (strain B4264).